The sequence spans 214 residues: Probable transaldolase (214 aa).

Lys-83 functions as the Schiff-base intermediate with substrate in the catalytic mechanism.

Belongs to the transaldolase family. Type 3B subfamily.

The protein resides in the cytoplasm. It carries out the reaction D-sedoheptulose 7-phosphate + D-glyceraldehyde 3-phosphate = D-erythrose 4-phosphate + beta-D-fructose 6-phosphate. It participates in carbohydrate degradation; pentose phosphate pathway; D-glyceraldehyde 3-phosphate and beta-D-fructose 6-phosphate from D-ribose 5-phosphate and D-xylulose 5-phosphate (non-oxidative stage): step 2/3. Transaldolase is important for the balance of metabolites in the pentose-phosphate pathway. The sequence is that of Probable transaldolase from Alkaliphilus metalliredigens (strain QYMF).